The chain runs to 494 residues: Cytochrome P450 2A5 (494 aa).

Residue Ser-131 is modified to Phosphoserine. Residue Lys-379 is modified to N6-acetyllysine. Residue Cys-439 coordinates heme.

It belongs to the cytochrome P450 family. It depends on heme as a cofactor. As to expression, liver, with a strong circadian rhythmicity. Circadian expression is regulated by DBP.

It is found in the endoplasmic reticulum membrane. The protein localises to the microsome membrane. The catalysed reaction is an organic molecule + reduced [NADPH--hemoprotein reductase] + O2 = an alcohol + oxidized [NADPH--hemoprotein reductase] + H2O + H(+). In terms of biological role, exhibits a high coumarin 7-hydroxylase activity. The polypeptide is Cytochrome P450 2A5 (Cyp2a5) (Mus musculus (Mouse)).